Here is a 192-residue protein sequence, read N- to C-terminus: Ion-translocating oxidoreductase complex subunit B (192 aa).

Positions 1-26 (MEMIVIAVVALTLLALLFGMLLGYAS) are hydrophobic. Residues 32–91 (EEDPVVDQVDELLPQSQCGQCGYPGCRPYAEAVANNGEQINRCVPGGEPVMQKIATLLNV) form the 4Fe-4S domain. [4Fe-4S] cluster is bound by residues C49, C52, C57, C74, C117, C120, C123, C127, C147, C150, C153, and C157. 4Fe-4S ferredoxin-type domains lie at 108-137 (MLAVIDEPNCIGCTKCIQACPVDAIVGATR) and 138-167 (AMHTVMSDLCTGCNLCVDPCPTQCIELRPA).

It belongs to the 4Fe4S bacterial-type ferredoxin family. RnfB subfamily. As to quaternary structure, the complex is composed of six subunits: RnfA, RnfB, RnfC, RnfD, RnfE and RnfG. [4Fe-4S] cluster serves as cofactor.

The protein resides in the cell inner membrane. Its function is as follows. Part of a membrane-bound complex that couples electron transfer with translocation of ions across the membrane. The protein is Ion-translocating oxidoreductase complex subunit B of Cronobacter sakazakii (strain ATCC BAA-894) (Enterobacter sakazakii).